A 338-amino-acid chain; its full sequence is Rho GTPase-activating protein gacA (338 aa).

The 179-residue stretch at 149–327 (NTLEHVEDEG…NVLSHKVAVH (179 aa)) folds into the Rho-GAP domain.

The protein resides in the cytoplasm. Functionally, rho GTPase-activating protein involved in the signal transduction pathway. This is Rho GTPase-activating protein gacA (gacA) from Dictyostelium discoideum (Social amoeba).